Reading from the N-terminus, the 427-residue chain is Trigger factor (427 aa).

The PPIase FKBP-type domain occupies 163–248 (GDTVVIDFVG…IHEVKAKEVP (86 aa)).

The protein belongs to the FKBP-type PPIase family. Tig subfamily.

Its subcellular location is the cytoplasm. The enzyme catalyses [protein]-peptidylproline (omega=180) = [protein]-peptidylproline (omega=0). Its function is as follows. Involved in protein export. Acts as a chaperone by maintaining the newly synthesized protein in an open conformation. Functions as a peptidyl-prolyl cis-trans isomerase. This Streptococcus pneumoniae (strain Hungary19A-6) protein is Trigger factor.